The chain runs to 166 residues: Small ribosomal subunit protein uS5 (166 aa).

Positions 11-74 constitute an S5 DRBM domain; it reads LIEKLITVNR…EKARRNMVTV (64 aa).

This sequence belongs to the universal ribosomal protein uS5 family. As to quaternary structure, part of the 30S ribosomal subunit. Contacts proteins S4 and S8.

Functionally, with S4 and S12 plays an important role in translational accuracy. Located at the back of the 30S subunit body where it stabilizes the conformation of the head with respect to the body. The sequence is that of Small ribosomal subunit protein uS5 from Idiomarina loihiensis (strain ATCC BAA-735 / DSM 15497 / L2-TR).